The primary structure comprises 394 residues: p-hydroxybenzoate hydroxylase (394 aa).

Residues S13, E32, 42–47 (RIRAGV), and Q102 contribute to the FAD site. Substrate-binding positions include Y201, 212 to 214 (SQR), and Y222. Residue D286 participates in FAD binding. Substrate is bound at residue P293. Residue 299-300 (LN) coordinates FAD.

This sequence belongs to the aromatic-ring hydroxylase family. Homodimer. Requires FAD as cofactor.

The enzyme catalyses 4-hydroxybenzoate + NADPH + O2 + H(+) = 3,4-dihydroxybenzoate + NADP(+) + H2O. It participates in aromatic compound metabolism; benzoate degradation via hydroxylation; 3,4-dihydroxybenzoate from benzoate: step 2/2. Functionally, catalyzes the incorporation of an atom of dioxygen into p-hydroxybenzoate (p-OHB) to form 3,4-dihydroxybenzoate (3,4DOHB). The reaction occurs in two parts: reduction of the flavin adenine dinucleotide (FAD) in the enzyme by reduced nicotinamide adenine dinucleotide phosphate (NADPH) in response to binding p-hydroxybenzoate to the enzyme and oxidation of reduced FAD with oxygen to form a hydroperoxide, which then oxygenates p-hydroxybenzoate. The protein is p-hydroxybenzoate hydroxylase (pobA) of Pseudomonas fluorescens.